The following is a 149-amino-acid chain: MEVILLEKVRNLGNLGDKVHVKSGYGRNYLIPQNKAVFATEQNIELFEKRRAELEKKAQQNLANAEQRAAKLNDTTIVISAMASDEGKLYGSVGVNEIKDALIEKQIEISKREIVMPEGPLHSIGNYVVEVHVHSDVVANLQVEIIPAK.

This sequence belongs to the bacterial ribosomal protein bL9 family.

Binds to the 23S rRNA. The polypeptide is Large ribosomal subunit protein bL9 (Legionella pneumophila (strain Lens)).